The sequence spans 614 residues: Probable ATP-dependent RNA helicase DDX5 (614 aa).

A compositionally biased stretch (basic and acidic residues) spans 1-15; the sequence is MSSYSSDRDRGRDRG. A disordered region spans residues 1–39; the sequence is MSSYSSDRDRGRDRGFGAPRFGGSRTGPLSGKKFGNPGE. S24 bears the Phosphoserine mark. K32 is modified (N6-acetyllysine; alternate). Residue K32 forms a Glycyl lysine isopeptide (Lys-Gly) (interchain with G-Cter in SUMO2); alternate linkage. An N6-acetyllysine mark is found at K33 and K40. Residue K45 forms a Glycyl lysine isopeptide (Lys-Gly) (interchain with G-Cter in SUMO2) linkage. A Glycyl lysine isopeptide (Lys-Gly) (interchain with G-Cter in SUMO2); alternate cross-link involves residue K53. K53 is covalently cross-linked (Glycyl lysine isopeptide (Lys-Gly) (interchain with G-Cter in SUMO); alternate). A Glycyl lysine isopeptide (Lys-Gly) (interchain with G-Cter in SUMO1); alternate cross-link involves residue K53. Residues 94-122 carry the Q motif motif; that stretch reads LNFYEANFPANVMDVIARQNFTEPTAIQA. ATP-binding positions include 114-116, Q121, and 138-145; these read FTE and AQTGSGKT. The region spanning 125–300 is the Helicase ATP-binding domain; the sequence is WPVALSGLDM…EDFLKDYIHI (176 aa). K236 is modified (N6-acetyllysine). A DEAD box motif is present at residues 248–251; the sequence is DEAD. Y297 is subject to Phosphotyrosine. Residues 328 to 475 enclose the Helicase C-terminal domain; sequence KLIRLMEEIM…AINPKLLQLV (148 aa). Residues K340, K343, K388, K391, K411, K437, K451, and K470 each participate in a glycyl lysine isopeptide (Lys-Gly) (interchain with G-Cter in SUMO2) cross-link. Positions 477 to 504 are disordered; it reads DRGSGRSRGRGGMKDDRRDRYSAGKRGG. The interval 477 to 614 is transactivation domain; the sequence is DRGSGRSRGR…GYPMPTGYSQ (138 aa). S480 is modified (phosphoserine). A compositionally biased stretch (basic and acidic residues) spans 488–498; that stretch reads GMKDDRRDRYS. A Glycyl lysine isopeptide (Lys-Gly) (interchain with G-Cter in SUMO2) cross-link involves residue K523.

This sequence belongs to the DEAD box helicase family. DDX5/DBP2 subfamily. As to quaternary structure, identified in the spliceosome C complex. Component of a ribonucleoprotein complex containing mRNAs and RNA-binding proteins including DDX5, HNRNPH2 and SRSF1 as well as splicing regulator ARVCF. Interacts with RBM4; the interaction occurs in an RNA-independent manner. Interacts with AGO1 and AGO2. Interacts with ESR1, AR, EP300, CREBBP, POLR2A, TP53, RUNX2 and HDAC1. Self-associates. Interacts with DDX17. Interacts with BRDT. The large PER complex involved in the repression of transcriptional termination is composed of at least PER2, CDK9, DDX5, DHX9, NCBP1 and POLR2A (active). Interacts with DHX36; this interaction occurs in a RNA-dependent manner. Interacts with NUPR1. Interacts with ERCC6. Interacts with DDX3X in the cytoplasm; this interaction may be more efficient when both proteins are unphosphorylated. Sumoylated; sumoylation, promoted by PIAS1, promotes interaction with HDAC1 and transcriptional repression activity. Sumoylation also significantly increases stability, and reduces polyubiquitination. In terms of processing, polyubiquitinated, leading to proteasomal degradation. Post-translationally, weakly phosphorylated in the G1/S phase of the cell cycle and much more at G2/M, especially at Thr and Tyr residues.

Its subcellular location is the nucleus. It localises to the nucleolus. The protein resides in the cytoplasm. The enzyme catalyses ATP + H2O = ADP + phosphate + H(+). In terms of biological role, involved in the alternative regulation of pre-mRNA splicing; its RNA helicase activity is necessary for increasing tau exon 10 inclusion and occurs in a RBM4-dependent manner. Binds to the tau pre-mRNA in the stem-loop region downstream of exon 10. The rate of ATP hydrolysis is highly stimulated by single-stranded RNA. Involved in transcriptional regulation; the function is independent of the RNA helicase activity. Transcriptional coactivator for androgen receptor AR but probably not ESR1. Synergizes with DDX17 and SRA1 RNA to activate MYOD1 transcriptional activity and involved in skeletal muscle differentiation. Transcriptional coactivator for p53/TP53 and involved in p53/TP53 transcriptional response to DNA damage and p53/TP53-dependent apoptosis. Transcriptional coactivator for RUNX2 and involved in regulation of osteoblast differentiation. Acts as a transcriptional repressor in a promoter-specific manner; the function probably involves association with histone deacetylases, such as HDAC1. As component of a large PER complex is involved in the inhibition of 3' transcriptional termination of circadian target genes such as PER1 and NR1D1 and the control of the circadian rhythms. The chain is Probable ATP-dependent RNA helicase DDX5 (Ddx5) from Mus musculus (Mouse).